A 220-amino-acid chain; its full sequence is UPF0319 protein YccT (220 aa).

The signal sequence occupies residues 1–20; sequence MKTGALATFLALCLPATVFA.

Belongs to the UPF0319 family.

The protein is UPF0319 protein YccT of Salmonella heidelberg (strain SL476).